We begin with the raw amino-acid sequence, 778 residues long: Ral guanine nucleotide dissociation stimulator-like 2 (778 aa).

The span at 1–15 (MLPRPLRLLLDTTPP) shows a compositional bias: low complexity. The interval 1 to 59 (MLPRPLRLLLDTTPPGGVVLSSFRSRDPEEGGDPGGRAVGGGQEEEDEEEEEASVSVWD) is disordered. The span at 33–42 (DPGGRAVGGG) shows a compositional bias: gly residues. The span at 43–59 (QEEEDEEEEEASVSVWD) shows a compositional bias: acidic residues. One can recognise an N-terminal Ras-GEF domain in the interval 88–212 (SSRRLRAGTL…GSADLIRNLR (125 aa)). A Ras-GEF domain is found at 243-513 (LADHLAEQLT…HRVSCEVEPP (271 aa)). 4 disordered regions span residues 503–524 (SHRV…ARTP), 541–564 (GGPT…GTPA), 581–647 (SLDS…GPGS), and 735–769 (RRPS…IKAT). The span at 581–592 (SLDSALESSPSL) shows a compositional bias: low complexity. The span at 620 to 632 (CGSPLSGNTGEGT) shows a compositional bias: polar residues. In terms of domain architecture, Ras-associating spans 649–736 (DCRIIRVQME…HDFLLRQRRR (88 aa)). Positions 738-756 (SAATPGSHSGPSASGTPPS) are enriched in low complexity.

As to quaternary structure, interacts with SAMD9.

Its function is as follows. Probable guanine nucleotide exchange factor. Putative effector of Ras and/or Rap. Associates with the GTP-bound form of Rap 1A and H-Ras in vitro. This chain is Ral guanine nucleotide dissociation stimulator-like 2 (Rgl2), found in Mus musculus (Mouse).